We begin with the raw amino-acid sequence, 218 residues long: N-(5'-phosphoribosyl)anthranilate isomerase (218 aa).

This sequence belongs to the TrpF family.

The catalysed reaction is N-(5-phospho-beta-D-ribosyl)anthranilate = 1-(2-carboxyphenylamino)-1-deoxy-D-ribulose 5-phosphate. It functions in the pathway amino-acid biosynthesis; L-tryptophan biosynthesis; L-tryptophan from chorismate: step 3/5. The protein is N-(5'-phosphoribosyl)anthranilate isomerase of Desulfatibacillum aliphaticivorans.